The chain runs to 238 residues: 2-C-methyl-D-erythritol 4-phosphate cytidylyltransferase (238 aa).

This sequence belongs to the IspD/TarI cytidylyltransferase family. IspD subfamily.

The enzyme catalyses 2-C-methyl-D-erythritol 4-phosphate + CTP + H(+) = 4-CDP-2-C-methyl-D-erythritol + diphosphate. It participates in isoprenoid biosynthesis; isopentenyl diphosphate biosynthesis via DXP pathway; isopentenyl diphosphate from 1-deoxy-D-xylulose 5-phosphate: step 2/6. Functionally, catalyzes the formation of 4-diphosphocytidyl-2-C-methyl-D-erythritol from CTP and 2-C-methyl-D-erythritol 4-phosphate (MEP). The chain is 2-C-methyl-D-erythritol 4-phosphate cytidylyltransferase from Aliivibrio fischeri (strain ATCC 700601 / ES114) (Vibrio fischeri).